Consider the following 113-residue polypeptide: Con-Ins G3 (113 aa).

The first 21 residues, 1–21 (MTTSFYFLLVALGLLLYVCQS), serve as a signal peptide directing secretion. The propeptide occupies 22–29 (SFGNQHTR). A 4-hydroxyproline; partial modification is found at Pro34. 3 disulfide bridges follow: Cys38–Cys99, Cys50–Cys112, and Cys98–Cys103. Glu41 bears the 4-carboxyglutamate mark. At His51 the chain carries Histidine amide. Residues 52–92 (GKRNDAGKKRGRASPLWQRQGFLSMLKAKRNEAFFLQRDGR) constitute a propeptide, c peptide. The residue at position 96 (Glu96) is a 4-carboxyglutamate. Residue Pro102 is modified to 4-hydroxyproline; partial.

This sequence belongs to the insulin family. In terms of assembly, heterodimer of A and B chains; disulfide-linked. Post-translationally, it is noteworthy that in this dimer, in contrast to Con-Ins G1, the chain B is amidated and not the chain A. In terms of tissue distribution, expressed by the venom gland.

Its subcellular location is the secreted. In terms of biological role, this venom insulin, from a fish-hunting cone snail, facilitates prey capture by rapidly inducing hypoglycemic shock. It is one of the smallest known insulin found in nature and lacks the C-terminal segment of the B chain that, in human insulin, mediates engagement of the insulin receptor (INSR) and assembly of the hormone's hexameric storage form. Despite lacking this segment, it both binds and activates human insulin receptor (long isoform (HIR-B)) with a high potency (EC(50)=242 nM). In vivo, intraperitoneal injection of this peptide into zebrafish lowers blood glucose with a lower potency than human insulin. In addition, when applied to water, this peptide reduces overall locomotor activity of zebrafish larvae, observed as a significant decrease in the percentage of time spent swimming and movement frequency. When tested on a mouse model of diabetes, this insulin also lowers blood glucose with a 10-fold lower potency than human insulin. The polypeptide is Con-Ins G3 (Conus geographus (Geography cone)).